A 1235-amino-acid polypeptide reads, in one-letter code: ATP-dependent helicase/nuclease subunit A (1235 aa).

Residues serine 12–arginine 482 enclose the UvrD-like helicase ATP-binding domain. Position 33-40 (alanine 33–threonine 40) interacts with ATP. The UvrD-like helicase C-terminal domain occupies alanine 509–glycine 800.

Belongs to the helicase family. AddA subfamily. In terms of assembly, heterodimer of AddA and AddB/RexB. Mg(2+) serves as cofactor.

It catalyses the reaction Couples ATP hydrolysis with the unwinding of duplex DNA by translocating in the 3'-5' direction.. The enzyme catalyses ATP + H2O = ADP + phosphate + H(+). The heterodimer acts as both an ATP-dependent DNA helicase and an ATP-dependent, dual-direction single-stranded exonuclease. Recognizes the chi site generating a DNA molecule suitable for the initiation of homologous recombination. The AddA nuclease domain is required for chi fragment generation; this subunit has the helicase and 3' -&gt; 5' nuclease activities. This Listeria monocytogenes serotype 4b (strain F2365) protein is ATP-dependent helicase/nuclease subunit A.